The following is a 137-amino-acid chain: Acyl carrier protein 4, chloroplastic (137 aa).

The N-terminal 48 residues, 1–48, are a transit peptide targeting the chloroplast; that stretch reads MASLSTTSLSFKAPSTTISQVLRKASSSQSVTFGRFTSSTKSLRLQIS. The Carrier domain occupies 53-128; the sequence is AETVQKVSDI…EAADLIEDLV (76 aa). Ser-88 bears the O-(pantetheine 4'-phosphoryl)serine mark.

The protein belongs to the acyl carrier protein (ACP) family. 4'-phosphopantetheine is transferred from CoA to a specific serine of apo-ACP by acpS. This modification is essential for activity because fatty acids are bound in thioester linkage to the sulfhydryl of the prosthetic group.

The protein localises to the plastid. Its subcellular location is the chloroplast. In terms of biological role, carrier of the growing fatty acid chain in fatty acid biosynthesis that plays a major role in the biosynthesis of fatty acids in leaves. Required for the biosynthesis of chloroplast photosynthetic membrane lipids such as monogalactosyldiacylglycerol, digalactosyldiacylglycerol and phosphatidylglycerol. Is essential for the biosynthesis of the cuticular wax and cutin polymers in leaves, and for the establishment of systemic acquired resistance (SAR). The chain is Acyl carrier protein 4, chloroplastic (ACP4) from Arabidopsis thaliana (Mouse-ear cress).